Reading from the N-terminus, the 199-residue chain is Inner membrane-spanning protein YciB (199 aa).

Transmembrane regions (helical) follow at residues 7-27 (HPLFKLATELGPLLVFFAANA), 32-52 (FVATAAFMVAIVAAMIASYVV), 56-76 (IPLMALVTGIVVIVFGTLTLV), 93-113 (LFAGVLGGGLLFGRSFIAIMF), 126-146 (VLTLRWALFFFGMAILNELIW), and 153-173 (FWVNFKVFGAVPLTMIFAMMQ).

Belongs to the YciB family.

It is found in the cell inner membrane. Functionally, plays a role in cell envelope biogenesis, maintenance of cell envelope integrity and membrane homeostasis. This Nitrobacter hamburgensis (strain DSM 10229 / NCIMB 13809 / X14) protein is Inner membrane-spanning protein YciB.